The sequence spans 54 residues: Large ribosomal subunit protein bL33 (54 aa).

The protein belongs to the bacterial ribosomal protein bL33 family.

This chain is Large ribosomal subunit protein bL33, found in Stenotrophomonas maltophilia (strain R551-3).